The chain runs to 108 residues: uncharacterized protein (108 aa).

This is an uncharacterized protein from Pasteurella multocida (strain Pm70).